The following is a 136-amino-acid chain: Magnetite biomineralization protein Mms6 (136 aa).

At 1–85 (MGEMEREGAT…AVGGTIWSGK (85 aa)) the chain is on the cytoplasmic side. A GL repeat region spans residues 86–95 (GLALGLGMGL). Residues 86–106 (GLALGLGMGLGAWGPLILGVV) traverse the membrane as a helical segment. The Lumenal portion of the chain corresponds to 107-136 (GAGAVYAYMKSRDIEAAQSDEEVELRDALS). The tract at residues 115–136 (MKSRDIEAAQSDEEVELRDALS) is MIC, self-assembles, binds magnetite, Fe(2+) and Fe(3+).

It belongs to the magnetosome Mms6 family. In terms of assembly, full length protein oligomerizes and interacts with MamA. Post-translationally, may undergo cleavage.

It localises to the magnetosome membrane. Its function is as follows. Promotes the formation of magnetite in Fe(2+)-rich conditions, when magnetite is not readily formed. Binds both Fe(2+) and Fe(3+). May help control the production of crystals with a specific morphology. May function with MamX, MamY amd MamZ in biomineralization. The 4 genes of this operon collectively influence magnetosome size and number. The protein is Magnetite biomineralization protein Mms6 of Magnetospirillum gryphiswaldense (strain DSM 6361 / JCM 21280 / NBRC 15271 / MSR-1).